Reading from the N-terminus, the 347-residue chain is Fc receptor-like A (347 aa).

Residues Met-1 to Ala-27 form the signal peptide. Ig-like C2-type domains are found at residues Pro-77 to Ser-166 and Pro-179 to Ser-257. Disulfide bonds link Cys-106–Cys-150 and Cys-199–Cys-247. The interval Lys-272–Asp-296 is disordered. The span at Pro-276–Pro-292 shows a compositional bias: pro residues.

Monomer or homodimer; disulfide-linked.

Its subcellular location is the cytoplasm. May be implicated in B-cell differentiation and lymphomagenesis. The polypeptide is Fc receptor-like A (Fcrla) (Rattus norvegicus (Rat)).